A 444-amino-acid polypeptide reads, in one-letter code: Porin AaxA (444 aa).

The first 19 residues, 1 to 19 (MAFSRFYLLTALYTGGILA), serve as a signal peptide directing secretion. The disordered stretch occupies residues 42 to 68 (KNSTQDSDSSPSESSPHPRQEPRRHVL). The span at 46 to 56 (QDSDSSPSESS) shows a compositional bias: low complexity.

This sequence belongs to the OprB family.

The protein localises to the cell outer membrane. Its function is as follows. Facilitates L-arginine uptake, as part of the AaxABC system. The arginine uptake by the bacterium in the macrophage may be a virulence factor against the host innate immune response. The protein is Porin AaxA (aaxA) of Chlamydia felis (strain Fe/C-56) (Chlamydophila felis).